Consider the following 310-residue polypeptide: TLC domain-containing protein 2 (310 aa).

The next 6 membrane-spanning stretches (helical) occupy residues L6–L26, N40–W60, V79–Q99, C117–L137, A167–L187, and L194–I214. The TLC domain occupies R33–Q227.

It belongs to the TLCD family.

It is found in the cell membrane. Regulates the composition and fluidity of the plasma membrane. Inhibits the incorporation of membrane-fluidizing phospholipids containing omega-3 long-chain polyunsaturated fatty acids (LCPUFA) and thereby promotes membrane rigidity. Does not appear to have any effect on LCPUFA synthesis. In Mus musculus (Mouse), this protein is TLC domain-containing protein 2 (Tlcd2).